Reading from the N-terminus, the 287-residue chain is Protein REVEILLE 2 (287 aa).

The region spanning 31-85 (TITKQREKWTEAEHEKFVEALKLYGRAWRRIEEHVGTKTAVQIRSHAQKFFTKVA) is the HTH myb-type domain. Residues 58–81 (WRRIEEHVGTKTAVQIRSHAQKFF) constitute a DNA-binding region (H-T-H motif). Residues 134–177 (QDEDNRSPTSVLSAHGSDGLGSIGSNSPNSSSAELSSHTEESLS) are disordered. The span at 156 to 169 (IGSNSPNSSSAELS) shows a compositional bias: low complexity.

It is found in the nucleus. Its function is as follows. Positive regulator for cold-responsive gene expression and cold tolerance. Part of a regulatory feedback loop that controls a subset of the circadian outputs and modulates the central oscillator. Negatively self-regulates its own expression. The sequence is that of Protein REVEILLE 2 (RVE2) from Arabidopsis thaliana (Mouse-ear cress).